The chain runs to 265 residues: MDVYGLIGNPVGHSLSPPMHEAGYEALGLDARYVTFEPPADAGAEAIEAAETLGVDGLNVTIPFKQDVLDAVDPAPLAERIGAVNTVDFTGGTPTGYNTDAVGAVRALDHHDVSLSGTAVVVGAGGAGRAVAFGLADEGLSVRIANRTESKADALADEVPDASGHGLDSLSDLLANADILVNCTSVGMEEDKTPVPADALHSDLAVLDAVYTPIETRLLQDAAAAGATTVDGAWMLLYQGVEAFERWTGEDAPVDRMNGRLREHL.

Residues serine 14–serine 16 and threonine 61 contribute to the shikimate site. The active-site Proton acceptor is the lysine 65. Asparagine 85 and aspartate 100 together coordinate shikimate. Residues glycine 123–alanine 127, asparagine 146–lysine 151, and alanine 209 each bind NADP(+). Tyrosine 211 lines the shikimate pocket. An NADP(+)-binding site is contributed by glycine 232.

This sequence belongs to the shikimate dehydrogenase family. As to quaternary structure, homodimer.

It carries out the reaction shikimate + NADP(+) = 3-dehydroshikimate + NADPH + H(+). Its pathway is metabolic intermediate biosynthesis; chorismate biosynthesis; chorismate from D-erythrose 4-phosphate and phosphoenolpyruvate: step 4/7. Functionally, involved in the biosynthesis of the chorismate, which leads to the biosynthesis of aromatic amino acids. Catalyzes the reversible NADPH linked reduction of 3-dehydroshikimate (DHSA) to yield shikimate (SA). This Haloarcula marismortui (strain ATCC 43049 / DSM 3752 / JCM 8966 / VKM B-1809) (Halobacterium marismortui) protein is Shikimate dehydrogenase (NADP(+)).